The sequence spans 173 residues: Shikimate kinase (173 aa).

14 to 19 (GAGKST) is an ATP binding site. Residue Ser18 coordinates Mg(2+). Positions 36, 60, and 82 each coordinate substrate. Residue Arg120 coordinates ATP. Arg140 contributes to the substrate binding site. Gln157 contacts ATP.

Belongs to the shikimate kinase family. Monomer. It depends on Mg(2+) as a cofactor.

It is found in the cytoplasm. The enzyme catalyses shikimate + ATP = 3-phosphoshikimate + ADP + H(+). Its pathway is metabolic intermediate biosynthesis; chorismate biosynthesis; chorismate from D-erythrose 4-phosphate and phosphoenolpyruvate: step 5/7. Its function is as follows. Catalyzes the specific phosphorylation of the 3-hydroxyl group of shikimic acid using ATP as a cosubstrate. The protein is Shikimate kinase of Buchnera aphidicola subsp. Acyrthosiphon pisum (strain APS) (Acyrthosiphon pisum symbiotic bacterium).